The sequence spans 109 residues: T cell receptor alpha variable 25 (109 aa).

The first 19 residues, Met1 to Gly19, serve as a signal peptide directing secretion. The Ig-like domain maps to Gln20 to Gly109. The cysteines at positions 41 and 107 are disulfide-linked. Residues Asn42 and Asn89 are each glycosylated (N-linked (GlcNAc...) asparagine).

As to quaternary structure, alpha-beta TR is a heterodimer composed of an alpha and beta chain; disulfide-linked. The alpha-beta TR is associated with the transmembrane signaling CD3 coreceptor proteins to form the TR-CD3 (TcR or TCR). The assembly of alpha-beta TR heterodimers with CD3 occurs in the endoplasmic reticulum where a single alpha-beta TR heterodimer associates with one CD3D-CD3E heterodimer, one CD3G-CD3E heterodimer and one CD247 homodimer forming a stable octameric structure. CD3D-CD3E and CD3G-CD3E heterodimers preferentially associate with TR alpha and TR beta chains, respectively. The association of the CD247 homodimer is the last step of TcR assembly in the endoplasmic reticulum and is required for transport to the cell surface.

It is found in the cell membrane. Functionally, v region of the variable domain of T cell receptor (TR) alpha chain that participates in the antigen recognition. Alpha-beta T cell receptors are antigen specific receptors which are essential to the immune response and are present on the cell surface of T lymphocytes. Recognize peptide-major histocompatibility (MH) (pMH) complexes that are displayed by antigen presenting cells (APC), a prerequisite for efficient T cell adaptive immunity against pathogens. Binding of alpha-beta TR to pMH complex initiates TR-CD3 clustering on the cell surface and intracellular activation of LCK that phosphorylates the ITAM motifs of CD3G, CD3D, CD3E and CD247 enabling the recruitment of ZAP70. In turn ZAP70 phosphorylates LAT, which recruits numerous signaling molecules to form the LAT signalosome. The LAT signalosome propagates signal branching to three major signaling pathways, the calcium, the mitogen-activated protein kinase (MAPK) kinase and the nuclear factor NF-kappa-B (NF-kB) pathways, leading to the mobilization of transcription factors that are critical for gene expression and essential for T cell growth and differentiation. The T cell repertoire is generated in the thymus, by V-(D)-J rearrangement. This repertoire is then shaped by intrathymic selection events to generate a peripheral T cell pool of self-MH restricted, non-autoaggressive T cells. Post-thymic interaction of alpha-beta TR with the pMH complexes shapes TR structural and functional avidity. This chain is T cell receptor alpha variable 25, found in Homo sapiens (Human).